A 277-amino-acid chain; its full sequence is Prohibitin-3, mitochondrial (277 aa).

Gly-2 carries the N-acetylglycine modification. Residues Gly-2–Ala-6 are Mitochondrial matrix-facing. A helical; Signal-anchor for type II membrane protein membrane pass occupies residues Ala-7–Leu-28. The Mitochondrial intermembrane portion of the chain corresponds to Asn-29 to Arg-277.

Belongs to the prohibitin family. In terms of assembly, component of a prohibitin multimeric complex in mitochondrial membranes. Mostly expressed in proliferative tissues, including vasculature, shoot and root apical tissues. Expressed in roots, stems, leaves and flowers (at protein level).

The protein localises to the cell membrane. The protein resides in the mitochondrion inner membrane. It is found in the nucleus. It localises to the cytoplasm. Its function is as follows. Prohibitin probably acts as a holdase/unfoldase for the stabilization of newly synthesized mitochondrial proteins. Necessary for mitochondrial and cell metabolism and biogenesis. Required to regulate the ethylene-mediated signaling; involved in growth maintenance in the presence of ethylene. Functions in nitric oxide (NO)-mediated responses and in hydrogen peroxide-induced NO accumulation. The sequence is that of Prohibitin-3, mitochondrial (PHB3) from Arabidopsis thaliana (Mouse-ear cress).